Consider the following 131-residue polypeptide: Large ribosomal subunit protein bL19 (131 aa).

The protein belongs to the bacterial ribosomal protein bL19 family.

Functionally, this protein is located at the 30S-50S ribosomal subunit interface and may play a role in the structure and function of the aminoacyl-tRNA binding site. In Afipia carboxidovorans (strain ATCC 49405 / DSM 1227 / KCTC 32145 / OM5) (Oligotropha carboxidovorans), this protein is Large ribosomal subunit protein bL19.